Here is a 797-residue protein sequence, read N- to C-terminus: Protein tamozhennic (797 aa).

The PUB domain maps to 79 to 146 (QNAIVAFETI…AAEDTFVLEG (68 aa)). Disordered stretches follow at residues 515-570 (AGGI…ISDL) and 638-697 (LSIT…SAGV). Residues 662 to 679 (EKARTLDKKSGTGRREAK) are compositionally biased toward basic and acidic residues. A RanBP2-type zinc finger spans residues 735–766 (IVTSPNEWSCSFCTFLNPDTKRICEMCCRSKD).

In terms of assembly, homomultimer. Binds to dl and msl-1 via their nuclear localization signal (NLS). Also binds to Ran, Ran-like and mbo.

It is found in the cytoplasm. Has an essential role during oogenesis and embryogenesis, perhaps in modulating the levels of nuclear import of additional proteins. Modulates the nuclear import of dorsal (dl), Dif and male specific lethal 1 (msl-1). Negatively regulates nuclear import of dl and controls the accumulation of dl in the nucleus after immune challenge. The sequence is that of Protein tamozhennic (tamo) from Drosophila melanogaster (Fruit fly).